Reading from the N-terminus, the 142-residue chain is uncharacterized protein (142 aa).

This is an uncharacterized protein from Saccharomyces cerevisiae (strain ATCC 204508 / S288c) (Baker's yeast).